We begin with the raw amino-acid sequence, 97 residues long: NADH-quinone oxidoreductase subunit K (97 aa).

3 helical membrane-spanning segments follow: residues 1-21 (MSEY…GVLY), 25-45 (ILVM…LMVY), and 57-77 (VFVF…LAIL).

Belongs to the complex I subunit 4L family. As to quaternary structure, NDH-1 is composed of 14 different subunits. Subunits NuoA, H, J, K, L, M, N constitute the membrane sector of the complex.

Its subcellular location is the cell inner membrane. The catalysed reaction is a quinone + NADH + 5 H(+)(in) = a quinol + NAD(+) + 4 H(+)(out). Functionally, NDH-1 shuttles electrons from NADH, via FMN and iron-sulfur (Fe-S) centers, to quinones in the respiratory chain. The immediate electron acceptor for the enzyme in this species is believed to be a menaquinone. Couples the redox reaction to proton translocation (for every two electrons transferred, four hydrogen ions are translocated across the cytoplasmic membrane), and thus conserves the redox energy in a proton gradient. The chain is NADH-quinone oxidoreductase subunit K from Cytophaga hutchinsonii (strain ATCC 33406 / DSM 1761 / CIP 103989 / NBRC 15051 / NCIMB 9469 / D465).